The following is a 94-amino-acid chain: Mobilization protein C (94 aa).

Interacts with MobA and MobB to form the relaxosome.

In terms of biological role, this protein is essential to promote the specific transfer of the plasmid in the presence of conjugative plasmids. This chain is Mobilization protein C (mobC), found in Escherichia coli.